Reading from the N-terminus, the 207-residue chain is Large ribosomal subunit protein uL4 (207 aa).

Residues 44–78 (QRQGTHDVKNRSEVRGGGRKPWRQKGTGRARQGSI) form a disordered region. Over residues 47–59 (GTHDVKNRSEVRG) the composition is skewed to basic and acidic residues. Residues 60-71 (GGRKPWRQKGTG) are compositionally biased toward basic residues.

This sequence belongs to the universal ribosomal protein uL4 family. In terms of assembly, part of the 50S ribosomal subunit.

Its function is as follows. One of the primary rRNA binding proteins, this protein initially binds near the 5'-end of the 23S rRNA. It is important during the early stages of 50S assembly. It makes multiple contacts with different domains of the 23S rRNA in the assembled 50S subunit and ribosome. Forms part of the polypeptide exit tunnel. The polypeptide is Large ribosomal subunit protein uL4 (Brevibacillus brevis (strain 47 / JCM 6285 / NBRC 100599)).